Consider the following 197-residue polypeptide: FMN-dependent NADH:quinone oxidoreductase (197 aa).

Residues Ser10 and 17–19 each bind FMN; that span reads SFS.

The protein belongs to the azoreductase type 1 family. In terms of assembly, homodimer. It depends on FMN as a cofactor.

The catalysed reaction is 2 a quinone + NADH + H(+) = 2 a 1,4-benzosemiquinone + NAD(+). The enzyme catalyses N,N-dimethyl-1,4-phenylenediamine + anthranilate + 2 NAD(+) = 2-(4-dimethylaminophenyl)diazenylbenzoate + 2 NADH + 2 H(+). Its function is as follows. Quinone reductase that provides resistance to thiol-specific stress caused by electrophilic quinones. In terms of biological role, also exhibits azoreductase activity. Catalyzes the reductive cleavage of the azo bond in aromatic azo compounds to the corresponding amines. The protein is FMN-dependent NADH:quinone oxidoreductase of Mycoplasmoides gallisepticum (strain R(low / passage 15 / clone 2)) (Mycoplasma gallisepticum).